Reading from the N-terminus, the 451-residue chain is CCAAT/enhancer-binding protein (451 aa).

3 disordered regions span residues 210-236 (TYNNHSSDENSSVGSDSSSTIKEEPID), 267-298 (QSNNLSNNNSSSNNSSNNSSNNSSNSNTNSTN), and 328-389 (LKHH…AKVR). Low complexity-rich tracts occupy residues 218 to 228 (ENSSVGSDSSS), 268 to 298 (SNNLSNNNSSSNNSSNNSSNNSSNSNTNSTN), and 334 to 350 (LQQTQQQHAQQQQQHAQ). The span at 359 to 370 (KHVDKGTEEYRR) shows a compositional bias: basic and acidic residues. Residues 365–428 (TEEYRRRRER…SLHKQIYMQL (64 aa)) form the bZIP domain. Residues 369–398 (RRRRERNNIAVRKSREKAKVRSKEVEERVK) are basic motif. Positions 400 to 407 (LLKEKDAL) are leucine-zipper.

This sequence belongs to the bZIP family. C/EBP subfamily. In terms of assembly, binds DNA as a dimer and can form stable heterodimers.

It localises to the nucleus. Functionally, may be required for the expression of gene products mediating border cell migration. Among the DNA sequences that this protein binds with high affinity is a conserved site within the promoter of its gene. This Drosophila virilis (Fruit fly) protein is CCAAT/enhancer-binding protein (slbo).